The chain runs to 508 residues: Serine/threonine protein kinase OSK3 (508 aa).

The Protein kinase domain occupies 17–269; that stretch reads YNLGRTLGIG…IREIREHQWF (253 aa). Residues 23 to 31 and lysine 46 contribute to the ATP site; that span reads LGIGSFGKV. The active-site Proton acceptor is the aspartate 140. The region spanning 290–330 is the UBA domain; it reads MIDEDTLQDVVNLGYGKDHVCESLRNRLQNEATVAYYLLLD. The region spanning 459 to 507 is the KA1 domain; the sequence is NGRLPAVIKFEIQLYKTRDEKYLLDMQRVTGPQLLFLDFCADFLTKLRV.

The protein belongs to the protein kinase superfamily. Ser/Thr protein kinase family. As to quaternary structure, interacts with HDR1. As to expression, strongly expressed in immature seeds. Mostly expressed in panicles, and to a lower extent, in leaf sheaths.

It is found in the nucleus. It carries out the reaction L-seryl-[protein] + ATP = O-phospho-L-seryl-[protein] + ADP + H(+). It catalyses the reaction L-threonyl-[protein] + ATP = O-phospho-L-threonyl-[protein] + ADP + H(+). The protein is Serine/threonine protein kinase OSK3 of Oryza sativa subsp. indica (Rice).